The sequence spans 612 residues: U-box domain-containing protein 11 (612 aa).

Positions 127 to 196 (DEVGEQVELA…LHFGEEEEKQ (70 aa)) form a coiled coil. The 75-residue stretch at 240–314 (TIPVDFLCPV…SRWCAEHNIE (75 aa)) folds into the U-box domain. ARM repeat units follow at residues 363 to 402 (TDNRILIAEAGAIPVLVNLLTSEDVATQENAITCVLNLSI), 404 to 443 (ENNKELIMFAGAVTSIVQVLRAGTMEARENAAATLFSLSL), 445 to 484 (DENKIIIGGSGAIPALVDLLENGTPRGKKDAATALFNLCI), 486 to 526 (HGNK…VLAN), and 528 to 567 (QDAKSAIVKANTLPALIGILQTDQTRNRENAAAILLSLCK).

It carries out the reaction S-ubiquitinyl-[E2 ubiquitin-conjugating enzyme]-L-cysteine + [acceptor protein]-L-lysine = [E2 ubiquitin-conjugating enzyme]-L-cysteine + N(6)-ubiquitinyl-[acceptor protein]-L-lysine.. It participates in protein modification; protein ubiquitination. In terms of biological role, functions as an E3 ubiquitin ligase. The chain is U-box domain-containing protein 11 (PUB11) from Arabidopsis thaliana (Mouse-ear cress).